We begin with the raw amino-acid sequence, 129 residues long: Histone H2A-IV (129 aa).

This sequence belongs to the histone H2A family. As to quaternary structure, the nucleosome is a histone octamer containing two molecules each of H2A, H2B, H3 and H4 assembled in one H3-H4 heterotetramer and two H2A-H2B heterodimers. The octamer wraps approximately 147 bp of DNA.

Its subcellular location is the nucleus. It is found in the chromosome. Its function is as follows. Core component of nucleosome. Nucleosomes wrap and compact DNA into chromatin, limiting DNA accessibility to the cellular machineries which require DNA as a template. Histones thereby play a central role in transcription regulation, DNA repair, DNA replication and chromosomal stability. DNA accessibility is regulated via a complex set of post-translational modifications of histones, also called histone code, and nucleosome remodeling. This chain is Histone H2A-IV, found in Volvox carteri (Green alga).